We begin with the raw amino-acid sequence, 434 residues long: Asparagine--tRNA ligase (434 aa).

This sequence belongs to the class-II aminoacyl-tRNA synthetase family.

The protein localises to the cytoplasm. The enzyme catalyses tRNA(Asn) + L-asparagine + ATP = L-asparaginyl-tRNA(Asn) + AMP + diphosphate + H(+). The sequence is that of Asparagine--tRNA ligase from Pyrococcus abyssi (strain GE5 / Orsay).